A 142-amino-acid polypeptide reads, in one-letter code: Large ribosomal subunit protein uL13c (142 aa).

It belongs to the universal ribosomal protein uL13 family. In terms of assembly, part of the 50S ribosomal subunit.

Its subcellular location is the plastid. The protein localises to the chloroplast. The sequence is that of Large ribosomal subunit protein uL13c from Pyropia yezoensis (Susabi-nori).